The following is a 212-amino-acid chain: Small ribosomal subunit protein uS3 (212 aa).

The KH type-2 domain maps to I39–R108.

It belongs to the universal ribosomal protein uS3 family. In terms of assembly, part of the 30S ribosomal subunit. Forms a tight complex with proteins S10 and S14.

Binds the lower part of the 30S subunit head. Binds mRNA in the 70S ribosome, positioning it for translation. The protein is Small ribosomal subunit protein uS3 of Aquifex aeolicus (strain VF5).